A 362-amino-acid chain; its full sequence is Very-long-chain (3R)-3-hydroxyacyl-CoA dehydratase 3 (362 aa).

N-acetylmethionine is present on Met-1. The Cytoplasmic portion of the chain corresponds to 1–149 (METQVLTPHV…ETLTNLKKGY (149 aa)). One can recognise a CS domain in the interval 5 to 94 (VLTPHVYWAQ…KGSHWWERLT (90 aa)). A Phosphothreonine modification is found at Thr-7. Residues 111-138 (LDESDAEMELRAKEEERLNKLRLEREGS) adopt a coiled-coil conformation. Ser-114 is modified (phosphoserine). Residues 150 to 170 (LFMYNLVQLLGFSWIFVNLTV) form a helical membrane-spanning segment. The Lumenal portion of the chain corresponds to 171 to 189 (RFFILGKESFYDTFHNVAD). A helical membrane pass occupies residues 190-210 (MMYFCQMLALVETLNAAIGVT). Topologically, residues 211 to 212 (ST) are cytoplasmic. Residues 213–233 (PVLPALIQFLGRNFILFLVFG) traverse the membrane as a helical segment. Residues 234–242 (TMEEMQNKA) lie on the Lumenal side of the membrane. A helical transmembrane segment spans residues 243-263 (VVFFVFYSWSAIEIFRYPFYM). The Cytoplasmic portion of the chain corresponds to 264-280 (LSCIDMDWKVLTWLRYT). Residues 281-301 (MWIPLYPLGCLSEAVAVIQSI) traverse the membrane as a helical segment. Catalysis depends on residues Tyr-286 and Glu-293. Over 302-322 (PVFNESGRFSFTLPYPVKMKV) the chain is Lumenal. The chain crosses the membrane as a helical span at residues 323–343 (RFSFFLQVYLVMLFLGLYINF). Topologically, residues 344–362 (RHLYKQRRRRYGQKKKKLH) are cytoplasmic.

This sequence belongs to the very long-chain fatty acids dehydratase HACD family. May interact with enzymes of the ELO family (including ELOVL1); with those enzymes that mediate condensation, the first of the four steps of the reaction cycle responsible for fatty acids elongation, may be part of a larger fatty acids elongase complex. Interacts with RAC1. Associates with internalized insulin receptor/INSR complexes on Golgi/endosomal membranes; HACD3/PTPLAD1 together with ATIC and PRKAA2/AMPK2 is proposed to be part of a signaling network regulating INSR autophosphorylation and endocytosis.

It is found in the endoplasmic reticulum membrane. The enzyme catalyses a very-long-chain (3R)-3-hydroxyacyl-CoA = a very-long-chain (2E)-enoyl-CoA + H2O. The catalysed reaction is (3R)-hydroxyhexadecanoyl-CoA = (2E)-hexadecenoyl-CoA + H2O. The protein operates within lipid metabolism; fatty acid biosynthesis. Functionally, catalyzes the third of the four reactions of the long-chain fatty acids elongation cycle. This endoplasmic reticulum-bound enzymatic process, allows the addition of two carbons to the chain of long- and very long-chain fatty acids/VLCFAs per cycle. This enzyme catalyzes the dehydration of the 3-hydroxyacyl-CoA intermediate into trans-2,3-enoyl-CoA, within each cycle of fatty acid elongation. Thereby, it participates in the production of VLCFAs of different chain lengths that are involved in multiple biological processes as precursors of membrane lipids and lipid mediators. Involved in Rac1-signaling pathways leading to the modulation of gene expression. Promotes insulin receptor/INSR autophosphorylation and is involved in INSR internalization. The chain is Very-long-chain (3R)-3-hydroxyacyl-CoA dehydratase 3 from Mus musculus (Mouse).